A 320-amino-acid polypeptide reads, in one-letter code: GMP reductase (320 aa).

C174 functions as the Thioimidate intermediate in the catalytic mechanism. An NADP(+)-binding site is contributed by 203 to 226 (IIADGGLRVHGDIAKSIRMGASFC).

The protein belongs to the IMPDH/GMPR family. GuaC type 2 subfamily.

It catalyses the reaction IMP + NH4(+) + NADP(+) = GMP + NADPH + 2 H(+). Its function is as follows. Catalyzes the irreversible NADPH-dependent deamination of GMP to IMP. It functions in the conversion of nucleobase, nucleoside and nucleotide derivatives of G to A nucleotides, and in maintaining the intracellular balance of A and G nucleotides. This Mycoplasma mycoides subsp. mycoides SC (strain CCUG 32753 / NCTC 10114 / PG1) protein is GMP reductase.